Consider the following 870-residue polypeptide: Endoribonuclease YSH1 (870 aa).

Zn(2+) is bound by residues His-159, His-161, Asp-163, His-164, His-256, and Asp-277. His-499 functions as the Proton donor in the catalytic mechanism. His-521 serves as a coordination point for Zn(2+). The tract at residues 598-627 (ITELTEEKEEADEIKEDNGETDTTQKPNES) is disordered. Acidic residues predominate over residues 601-612 (LTEEKEEADEIK). A compositionally biased stretch (polar residues) spans 618-627 (TDTTQKPNES).

This sequence belongs to the metallo-beta-lactamase superfamily. RNA-metabolizing metallo-beta-lactamase-like family. CPSF2/YSH1 subfamily.

It is found in the nucleus. Its function is as follows. Component of the cleavage factor I (CF I) involved in pre-mRNA 3'-end processing. This Candida albicans (strain SC5314 / ATCC MYA-2876) (Yeast) protein is Endoribonuclease YSH1 (YSH1).